Here is a 190-residue protein sequence, read N- to C-terminus: Putative acetyltransferase DDB_G0275913 (190 aa).

The protein belongs to the transferase hexapeptide repeat family.

The protein is Putative acetyltransferase DDB_G0275913 of Dictyostelium discoideum (Social amoeba).